Reading from the N-terminus, the 383-residue chain is Mannitol-1-phosphate 5-dehydrogenase (383 aa).

3-14 (AVHFGAGNIGRG) is an NAD(+) binding site.

This sequence belongs to the mannitol dehydrogenase family.

The enzyme catalyses D-mannitol 1-phosphate + NAD(+) = beta-D-fructose 6-phosphate + NADH + H(+). The protein is Mannitol-1-phosphate 5-dehydrogenase of Lacticaseibacillus casei (strain BL23) (Lactobacillus casei).